The chain runs to 384 residues: G protein-coupled receptor 88 (384 aa).

The Extracellular portion of the chain corresponds to 1–35 (MTNSSSTSTSTTTGGSLLLLCEEEESWAGRRIPVS). N3 is a glycosylation site (N-linked (GlcNAc...) asparagine). A helical membrane pass occupies residues 36–56 (LLYSGLAIGGTLANGMVIYLV). At 57-73 (SSFRKLQTTSNAFIVNG) the chain is on the cytoplasmic side. Residues 74–94 (CAADLSVCALWMPQEAVLGLL) form a helical membrane-spanning segment. Residues 95–116 (PAGSAEPPGDWDSGGGSYRLLR) lie on the Extracellular side of the membrane. Residues 117 to 136 (GGLLGLGLTVSLLSHCLVAL) form a helical membrane-spanning segment. Residues 137 to 158 (NRYLLITRAPATYQVLYQRRHT) are Cytoplasmic-facing. A helical membrane pass occupies residues 159-179 (AGMLALSWALALGLVLLLPPW). Residues 180-195 (APKPGAEPPQVHYPAL) lie on the Extracellular side of the membrane. A helical membrane pass occupies residues 196–216 (LAAGALLAQTALLLHCYLGIV). Over 217-285 (RRVRVSVKRV…RAQRRLSGLS (69 aa)) the chain is Cytoplasmic. A helical transmembrane segment spans residues 286–306 (VLLLCCVFLLATQPLVWVSLA). The Extracellular portion of the chain corresponds to 307–310 (SGFS). The helical transmembrane segment at 311–331 (LPVPWGVQAASWLLCCALSAL) threads the bilayer. The Cytoplasmic segment spans residues 332–384 (NPLLYTWRNEEFRRSVRSVLPGVGDAAAAAAAATAVPAMSQAQLGTRAAGQHW).

Belongs to the G-protein coupled receptor 1 family. In terms of tissue distribution, expressed predominantly in the striatum. Expressed also in olfactory tubercle, nucleus accumbens, amygdala, and neocortex. Spinal cord, pons, and medulla expression remains discrete. Also expressed in peripheral tissues, including adrenal cortex (16 dpc to 21 dpc) and cochlear ganglia (19 dpc to P3) and also at moderate levels in retina (18 dpc to 19 dpc) and spleen (21 dpc to P7).

It localises to the cell membrane. The protein localises to the cell projection. It is found in the cilium membrane. The protein resides in the cytoplasm. Its subcellular location is the nucleus. Orphan G protein-coupled receptor implicated in a large repertoire of behavioral responses that engage motor activities, spatial learning, and emotional processing. May play a role in the regulation of cognitive and motor function. Couples with the heterotrimeric G protein complex of the G(i) subfamily, consisting of GNAI1, GNB1 and GNG2, thereby acting through a G(i)-mediated pathway. Plays a role in the attenuation of D1 dopamine receptor (D1R)-mediated cAMP response in ciliated cells. In non-ciliated cells, involved in the inhibition of the beta-2 adrenergic receptor (B2AR) response. The chain is G protein-coupled receptor 88 (Gpr88) from Rattus norvegicus (Rat).